Reading from the N-terminus, the 103-residue chain is Large ribosomal subunit protein bL21 (103 aa).

Belongs to the bacterial ribosomal protein bL21 family. In terms of assembly, part of the 50S ribosomal subunit. Contacts protein L20.

Functionally, this protein binds to 23S rRNA in the presence of protein L20. The sequence is that of Large ribosomal subunit protein bL21 from Escherichia coli O127:H6 (strain E2348/69 / EPEC).